The primary structure comprises 726 residues: Catalase-peroxidase (726 aa).

Positions 93–216 form a cross-link, tryptophyl-tyrosyl-methioninium (Trp-Tyr) (with M-242); the sequence is WHSAGTYRVH…LAAVQMGLIY (124 aa). The active-site Proton acceptor is histidine 94. Residues 216-242 constitute a cross-link (tryptophyl-tyrosyl-methioninium (Tyr-Met) (with W-93)); the sequence is YVNPEGPNGNPDPVAAAVDIRETFTRM. A heme b-binding site is contributed by histidine 257. The disordered stretch occupies residues 471-490; sequence GSDKRGGANGARIRLSPQKD.

Belongs to the peroxidase family. Peroxidase/catalase subfamily. In terms of assembly, homodimer or homotetramer. It depends on heme b as a cofactor. Formation of the three residue Trp-Tyr-Met cross-link is important for the catalase, but not the peroxidase activity of the enzyme.

It carries out the reaction H2O2 + AH2 = A + 2 H2O. It catalyses the reaction 2 H2O2 = O2 + 2 H2O. Bifunctional enzyme with both catalase and broad-spectrum peroxidase activity. The chain is Catalase-peroxidase from Methylacidiphilum infernorum (isolate V4) (Methylokorus infernorum (strain V4)).